A 55-amino-acid polypeptide reads, in one-letter code: Large ribosomal subunit protein bL33 (55 aa).

Belongs to the bacterial ribosomal protein bL33 family.

This Beijerinckia indica subsp. indica (strain ATCC 9039 / DSM 1715 / NCIMB 8712) protein is Large ribosomal subunit protein bL33.